Here is a 391-residue protein sequence, read N- to C-terminus: S-adenosylmethionine synthase (391 aa).

Histidine 16 is an ATP binding site. Aspartate 18 provides a ligand contact to Mg(2+). Glutamate 44 serves as a coordination point for K(+). L-methionine-binding residues include glutamate 57 and glutamine 101. The interval 101-111 (QSADIAQGVDA) is flexible loop. ATP is bound by residues 166–168 (DAK), aspartate 244, 250–251 (RK), alanine 267, and lysine 271. Aspartate 244 contributes to the L-methionine binding site. Position 275 (lysine 275) interacts with L-methionine.

This sequence belongs to the AdoMet synthase family. As to quaternary structure, homotetramer; dimer of dimers. The cofactor is Mg(2+). Requires K(+) as cofactor.

The protein resides in the cytoplasm. The enzyme catalyses L-methionine + ATP + H2O = S-adenosyl-L-methionine + phosphate + diphosphate. The protein operates within amino-acid biosynthesis; S-adenosyl-L-methionine biosynthesis; S-adenosyl-L-methionine from L-methionine: step 1/1. In terms of biological role, catalyzes the formation of S-adenosylmethionine (AdoMet) from methionine and ATP. The overall synthetic reaction is composed of two sequential steps, AdoMet formation and the subsequent tripolyphosphate hydrolysis which occurs prior to release of AdoMet from the enzyme. This Zymomonas mobilis subsp. mobilis (strain ATCC 31821 / ZM4 / CP4) protein is S-adenosylmethionine synthase.